Consider the following 288-residue polypeptide: 4-diphosphocytidyl-2-C-methyl-D-erythritol kinase (288 aa).

Residue Lys10 is part of the active site. Position 94-104 (94-104) interacts with ATP; sequence PVAAGLGGGSS. Asp136 is an active-site residue.

Belongs to the GHMP kinase family. IspE subfamily.

The catalysed reaction is 4-CDP-2-C-methyl-D-erythritol + ATP = 4-CDP-2-C-methyl-D-erythritol 2-phosphate + ADP + H(+). It participates in isoprenoid biosynthesis; isopentenyl diphosphate biosynthesis via DXP pathway; isopentenyl diphosphate from 1-deoxy-D-xylulose 5-phosphate: step 3/6. Functionally, catalyzes the phosphorylation of the position 2 hydroxy group of 4-diphosphocytidyl-2C-methyl-D-erythritol. In Lactiplantibacillus plantarum (strain ATCC BAA-793 / NCIMB 8826 / WCFS1) (Lactobacillus plantarum), this protein is 4-diphosphocytidyl-2-C-methyl-D-erythritol kinase.